Reading from the N-terminus, the 760-residue chain is Xaa-Pro dipeptidyl-peptidase (760 aa).

Residues S349, D469, and H499 each act as charge relay system in the active site.

This sequence belongs to the peptidase S15 family. In terms of assembly, homodimer.

The protein localises to the cytoplasm. The enzyme catalyses Hydrolyzes Xaa-Pro-|- bonds to release unblocked, N-terminal dipeptides from substrates including Ala-Pro-|-p-nitroanilide and (sequentially) Tyr-Pro-|-Phe-Pro-|-Gly-Pro-|-Ile.. Its function is as follows. Removes N-terminal dipeptides sequentially from polypeptides having unsubstituted N-termini provided that the penultimate residue is proline. This Streptococcus pyogenes serotype M1 protein is Xaa-Pro dipeptidyl-peptidase.